Consider the following 555-residue polypeptide: Dynein regulatory complex protein 11 (555 aa).

IQ domains are found at residues 154 to 183 (EDEAILMIQKNERGRQARERARLAAITKRQ) and 199 to 226 (HEEAARKIQAAIRGFLWRRRIKKEADKE). 4 disordered regions span residues 232–255 (MKPKPRDPKRDPQMGEAKNLMRRK), 299–377 (KRNP…EQKI), 450–469 (AAKLGKKGKKKKGKKKEPFS), and 501–555 (AKKD…SCGA). Composition is skewed to basic and acidic residues over residues 235–244 (KPRDPKRDPQ) and 338–367 (GDGKGKGKDGKGDAKKDAKKDPKKDKKGGG). The segment covering 452 to 464 (KLGKKGKKKKGKK) has biased composition (basic residues). Positions 501–521 (AKKDEKDAAGDGKGKGKDGKG) are enriched in basic and acidic residues. The segment covering 537-546 (KKKKGGKKKS) has biased composition (basic residues).

Belongs to the AAA ATPase family. DRC11 subfamily. As to quaternary structure, component of the nexin-dynein regulatory complex (N-DRC). Interacts with DRC5.

The protein resides in the cytoplasm. The protein localises to the cytoskeleton. Its subcellular location is the flagellum axoneme. Component of the nexin-dynein regulatory complex (N-DRC), a key regulator of ciliary/flagellar motility which maintains the alignment and integrity of the distal axoneme and regulates microtubule sliding in motile axonemes. This Chlamydomonas reinhardtii (Chlamydomonas smithii) protein is Dynein regulatory complex protein 11.